Consider the following 191-residue polypeptide: IMP cyclohydrolase (191 aa).

It belongs to the archaeal IMP cyclohydrolase family.

The catalysed reaction is IMP + H2O = 5-formamido-1-(5-phospho-D-ribosyl)imidazole-4-carboxamide. It functions in the pathway purine metabolism; IMP biosynthesis via de novo pathway; IMP from 5-formamido-1-(5-phospho-D-ribosyl)imidazole-4-carboxamide: step 1/1. Its function is as follows. Catalyzes the cyclization of 5-formylamidoimidazole-4-carboxamide ribonucleotide to IMP. The protein is IMP cyclohydrolase of Natronomonas pharaonis (strain ATCC 35678 / DSM 2160 / CIP 103997 / JCM 8858 / NBRC 14720 / NCIMB 2260 / Gabara) (Halobacterium pharaonis).